The sequence spans 353 residues: Photosystem II protein D1 (353 aa).

At Thr2 the chain carries N-acetylthreonine. A Phosphothreonine modification is found at Thr2. Transmembrane regions (helical) follow at residues 29–46 (YIGWFGVLMIPTLLTATS), 118–133 (HFLLGVACYMGREWEL), and 142–156 (WIAVAYSAPVAAATA). Chlorophyll a is bound at residue His118. Tyr126 is a binding site for pheophytin a. The [CaMn4O5] cluster site is built by Asp170 and Glu189. The helical transmembrane segment at 197–218 (FHMLGVAGVFGGSLFSAMHGSL) threads the bilayer. His198 serves as a coordination point for chlorophyll a. Residues His215 and 264 to 265 (SF) each bind a quinone. His215 contributes to the Fe cation binding site. A Fe cation-binding site is contributed by His272. Residues 274-288 (FLAAWPVVGIWFTAL) form a helical membrane-spanning segment. Residues His332, Glu333, Asp342, and Ala344 each contribute to the [CaMn4O5] cluster site. A propeptide spanning residues 345–353 (AVEAPSING) is cleaved from the precursor.

It belongs to the reaction center PufL/M/PsbA/D family. As to quaternary structure, PSII is composed of 1 copy each of membrane proteins PsbA, PsbB, PsbC, PsbD, PsbE, PsbF, PsbH, PsbI, PsbJ, PsbK, PsbL, PsbM, PsbT, PsbX, PsbY, PsbZ, Psb30/Ycf12, at least 3 peripheral proteins of the oxygen-evolving complex and a large number of cofactors. It forms dimeric complexes. It depends on The D1/D2 heterodimer binds P680, chlorophylls that are the primary electron donor of PSII, and subsequent electron acceptors. It shares a non-heme iron and each subunit binds pheophytin, quinone, additional chlorophylls, carotenoids and lipids. D1 provides most of the ligands for the Mn4-Ca-O5 cluster of the oxygen-evolving complex (OEC). There is also a Cl(-1) ion associated with D1 and D2, which is required for oxygen evolution. The PSII complex binds additional chlorophylls, carotenoids and specific lipids. as a cofactor. In terms of processing, tyr-161 forms a radical intermediate that is referred to as redox-active TyrZ, YZ or Y-Z. C-terminally processed by CTPA; processing is essential to allow assembly of the oxygen-evolving complex and thus photosynthetic growth.

The protein resides in the plastid. Its subcellular location is the chloroplast thylakoid membrane. It catalyses the reaction 2 a plastoquinone + 4 hnu + 2 H2O = 2 a plastoquinol + O2. Its function is as follows. Photosystem II (PSII) is a light-driven water:plastoquinone oxidoreductase that uses light energy to abstract electrons from H(2)O, generating O(2) and a proton gradient subsequently used for ATP formation. It consists of a core antenna complex that captures photons, and an electron transfer chain that converts photonic excitation into a charge separation. The D1/D2 (PsbA/PsbD) reaction center heterodimer binds P680, the primary electron donor of PSII as well as several subsequent electron acceptors. The polypeptide is Photosystem II protein D1 (Lotus japonicus (Lotus corniculatus var. japonicus)).